The following is a 696-amino-acid chain: DNA ligase (696 aa).

NAD(+) contacts are provided by residues 36–40 (DAEYD), 85–86 (SL), and glutamate 123. Lysine 125 serves as the catalytic N6-AMP-lysine intermediate. NAD(+) is bound by residues arginine 146, glutamate 181, lysine 319, and lysine 343. 4 residues coordinate Zn(2+): cysteine 437, cysteine 440, cysteine 455, and cysteine 461. The BRCT domain occupies 618–696 (PEGTSLAGKT…EDGLKALLGL (79 aa)).

This sequence belongs to the NAD-dependent DNA ligase family. LigA subfamily. It depends on Mg(2+) as a cofactor. Mn(2+) is required as a cofactor.

The enzyme catalyses NAD(+) + (deoxyribonucleotide)n-3'-hydroxyl + 5'-phospho-(deoxyribonucleotide)m = (deoxyribonucleotide)n+m + AMP + beta-nicotinamide D-nucleotide.. In terms of biological role, DNA ligase that catalyzes the formation of phosphodiester linkages between 5'-phosphoryl and 3'-hydroxyl groups in double-stranded DNA using NAD as a coenzyme and as the energy source for the reaction. It is essential for DNA replication and repair of damaged DNA. The polypeptide is DNA ligase (Bordetella pertussis (strain Tohama I / ATCC BAA-589 / NCTC 13251)).